A 1649-amino-acid chain; its full sequence is DNA-directed RNA polymerase subunit beta' (1649 aa).

Cys-62, Cys-64, Cys-77, and Cys-80 together coordinate Zn(2+). Mg(2+) contacts are provided by Asp-746, Asp-748, and Asp-750. Residues Cys-1077, Cys-1268, Cys-1275, and Cys-1278 each coordinate Zn(2+).

It belongs to the RNA polymerase beta' chain family. The RNAP catalytic core consists of 2 alpha, 1 beta, 1 beta' and 1 omega subunit. When a sigma factor is associated with the core the holoenzyme is formed, which can initiate transcription. Mg(2+) serves as cofactor. Requires Zn(2+) as cofactor.

It catalyses the reaction RNA(n) + a ribonucleoside 5'-triphosphate = RNA(n+1) + diphosphate. Its function is as follows. DNA-dependent RNA polymerase catalyzes the transcription of DNA into RNA using the four ribonucleoside triphosphates as substrates. The protein is DNA-directed RNA polymerase subunit beta' of Thermosipho africanus (strain TCF52B).